The following is a 187-amino-acid chain: UPF0301 protein PBPRA3139 (187 aa).

It belongs to the UPF0301 (AlgH) family.

In Photobacterium profundum (strain SS9), this protein is UPF0301 protein PBPRA3139.